The primary structure comprises 315 residues: Methenyltetrahydromethanopterin cyclohydrolase (315 aa).

The protein belongs to the MCH family.

It localises to the cytoplasm. The catalysed reaction is 5,10-methenyl-5,6,7,8-tetrahydromethanopterin + H2O = N(5)-formyl-5,6,7,8-tetrahydromethanopterin + H(+). The protein operates within one-carbon metabolism; methanogenesis from CO(2); 5,10-methenyl-5,6,7,8-tetrahydromethanopterin from CO(2): step 3/3. Catalyzes the reversible interconversion of 5-formyl-H(4)MPT to methenyl-H(4)MPT(+). The protein is Methenyltetrahydromethanopterin cyclohydrolase of Methanoculleus marisnigri (strain ATCC 35101 / DSM 1498 / JR1).